The sequence spans 784 residues: DNA ligase (784 aa).

NAD(+) contacts are provided by residues 35-39, 84-85, and E117; these read DAEYD and SL. K119 functions as the N6-AMP-lysine intermediate in the catalytic mechanism. Residues R140, E177, K294, and K318 each contribute to the NAD(+) site. Zn(2+) is bound by residues C412, C415, C442, and C448. The BRCT domain occupies 703–784; the sequence is AEGLPLAGQT…FLALLRQLES (82 aa).

This sequence belongs to the NAD-dependent DNA ligase family. LigA subfamily. The cofactor is Mg(2+). Mn(2+) serves as cofactor.

The catalysed reaction is NAD(+) + (deoxyribonucleotide)n-3'-hydroxyl + 5'-phospho-(deoxyribonucleotide)m = (deoxyribonucleotide)n+m + AMP + beta-nicotinamide D-nucleotide.. Its function is as follows. DNA ligase that catalyzes the formation of phosphodiester linkages between 5'-phosphoryl and 3'-hydroxyl groups in double-stranded DNA using NAD as a coenzyme and as the energy source for the reaction. It is essential for DNA replication and repair of damaged DNA. The protein is DNA ligase of Azotobacter vinelandii (strain DJ / ATCC BAA-1303).